We begin with the raw amino-acid sequence, 704 residues long: Polyribonucleotide nucleotidyltransferase (704 aa).

Residues D485 and D491 each coordinate Mg(2+). A KH domain is found at 552–611 (PKTETIQIDPDKIRSVIGAGGKVINKIIQDTGVKIDIKEDGSVFVSSSDHAGVKEAIKII). The S1 motif domain maps to 621 to 689 (GEIYLGKVTK…SQGRINLSRK (69 aa)).

The protein belongs to the polyribonucleotide nucleotidyltransferase family. Mg(2+) is required as a cofactor.

The protein resides in the cytoplasm. The enzyme catalyses RNA(n+1) + phosphate = RNA(n) + a ribonucleoside 5'-diphosphate. Functionally, involved in mRNA degradation. Catalyzes the phosphorolysis of single-stranded polyribonucleotides processively in the 3'- to 5'-direction. This is Polyribonucleotide nucleotidyltransferase from Clostridium botulinum (strain Eklund 17B / Type B).